A 270-amino-acid polypeptide reads, in one-letter code: Regulatory protein RecX (270 aa).

It belongs to the RecX family.

The protein resides in the cytoplasm. In terms of biological role, modulates RecA activity. The chain is Regulatory protein RecX from Bacillus cereus (strain 03BB102).